Reading from the N-terminus, the 345-residue chain is Annexin A9 (345 aa).

Annexin repeat units lie at residues 41–112 (FSAD…ALLQ), 113–184 (PAAH…ALAK), 197–266 (NLAA…NLAS), and 270–341 (NTPL…ALCR).

Belongs to the annexin family. Homodimer.

May act as a low affinity receptor for acetylcholine. This Bos taurus (Bovine) protein is Annexin A9 (ANXA9).